The primary structure comprises 304 residues: Porphobilinogen deaminase (304 aa).

At Cys-240 the chain carries S-(dipyrrolylmethanemethyl)cysteine.

It belongs to the HMBS family. Monomer. Dipyrromethane serves as cofactor.

It catalyses the reaction 4 porphobilinogen + H2O = hydroxymethylbilane + 4 NH4(+). It functions in the pathway porphyrin-containing compound metabolism; protoporphyrin-IX biosynthesis; coproporphyrinogen-III from 5-aminolevulinate: step 2/4. Tetrapolymerization of the monopyrrole PBG into the hydroxymethylbilane pre-uroporphyrinogen in several discrete steps. This Xanthomonas oryzae pv. oryzae (strain MAFF 311018) protein is Porphobilinogen deaminase.